Here is a 107-residue protein sequence, read N- to C-terminus: Large ribosomal subunit protein uL24 (107 aa).

Belongs to the universal ribosomal protein uL24 family. As to quaternary structure, part of the 50S ribosomal subunit.

In terms of biological role, one of two assembly initiator proteins, it binds directly to the 5'-end of the 23S rRNA, where it nucleates assembly of the 50S subunit. Its function is as follows. One of the proteins that surrounds the polypeptide exit tunnel on the outside of the subunit. In Mesomycoplasma hyopneumoniae (strain J / ATCC 25934 / NCTC 10110) (Mycoplasma hyopneumoniae), this protein is Large ribosomal subunit protein uL24.